Consider the following 245-residue polypeptide: Small ribosomal subunit protein uS2 (245 aa).

It belongs to the universal ribosomal protein uS2 family.

The chain is Small ribosomal subunit protein uS2 from Pseudomonas putida (strain GB-1).